The chain runs to 302 residues: MLSALESILLSVATSEAMLGVLGNTFIVLVNYTDWVRNKKLSKINFILTGLAISRIFTIWIITLDAYTKVFLLTMLMPSSLHECMSYIWVIINHLSVWFSTSLGIFYFLKIANFSHYIFLWMKRRADKVFVFLIVFLIITWLASFPLAVKVIKDVKIYQSNTSWLIHLEKSELLINYVFANMGPISLFIVAIIACFLLTISLWRHSRQMQSIGSGFRDLNTEAHMKAMKVLIAFIILFILYFLGILIETLCLFLTNNKLLFIFGFTLSAMYPCCHSFILILTSRELKQATMRALQRLKCCET.

The Extracellular portion of the chain corresponds to 1–7; the sequence is MLSALES. A helical membrane pass occupies residues 8-28; sequence ILLSVATSEAMLGVLGNTFIV. Residues 29 to 43 lie on the Cytoplasmic side of the membrane; that stretch reads LVNYTDWVRNKKLSK. A helical membrane pass occupies residues 44–64; sequence INFILTGLAISRIFTIWIITL. Residues 65 to 87 are Extracellular-facing; it reads DAYTKVFLLTMLMPSSLHECMSY. The chain crosses the membrane as a helical span at residues 88 to 108; it reads IWVIINHLSVWFSTSLGIFYF. Topologically, residues 109 to 128 are cytoplasmic; the sequence is LKIANFSHYIFLWMKRRADK. A helical transmembrane segment spans residues 129-149; the sequence is VFVFLIVFLIITWLASFPLAV. The Extracellular segment spans residues 150–182; the sequence is KVIKDVKIYQSNTSWLIHLEKSELLINYVFANM. An N-linked (GlcNAc...) asparagine glycan is attached at asparagine 161. The helical transmembrane segment at 183–203 threads the bilayer; that stretch reads GPISLFIVAIIACFLLTISLW. Residues 204 to 229 lie on the Cytoplasmic side of the membrane; the sequence is RHSRQMQSIGSGFRDLNTEAHMKAMK. The helical transmembrane segment at 230 to 250 threads the bilayer; it reads VLIAFIILFILYFLGILIETL. Over 251–259 the chain is Extracellular; sequence CLFLTNNKL. A helical membrane pass occupies residues 260–280; sequence LFIFGFTLSAMYPCCHSFILI. The Cytoplasmic segment spans residues 281-302; the sequence is LTSRELKQATMRALQRLKCCET.

The protein belongs to the G-protein coupled receptor T2R family.

Its subcellular location is the membrane. In terms of biological role, putative taste receptor which may play a role in the perception of bitterness. The protein is Taste receptor type 2 member 104 of Mus musculus (Mouse).